Consider the following 436-residue polypeptide: ATP-dependent 6-phosphofructokinase (436 aa).

Residues Gly-90, 155-156 (RG), and 180-183 (GDGT) each bind ATP. Asp-181 provides a ligand contact to Mg(2+). Residues 209–211 (TID), 254–256 (MGR), Glu-307, and 362–365 (YMIR) contribute to the substrate site. The active-site Proton acceptor is Asp-211.

The protein belongs to the phosphofructokinase type A (PFKA) family. PPi-dependent PFK group II subfamily. Atypical ATP-dependent clade 'X' sub-subfamily. In terms of assembly, homodimer. Aggregates to a homotetramer after activation by ATP. Mg(2+) serves as cofactor.

Its subcellular location is the cytoplasm. It catalyses the reaction beta-D-fructose 6-phosphate + ATP = beta-D-fructose 1,6-bisphosphate + ADP + H(+). It participates in carbohydrate degradation; glycolysis; D-glyceraldehyde 3-phosphate and glycerone phosphate from D-glucose: step 3/4. Activated by nucleoside triphosphates. Inhibited by phosphoenolpyruvate. EDTA and biphosphonates play the role of inhibitors of kinase activity. Functionally, catalyzes the phosphorylation of D-fructose 6-phosphate to fructose 1,6-bisphosphate by ATP, the first committing step of glycolysis. In Entamoeba histolytica (strain ATCC 30459 / HM-1:IMSS / ABRM), this protein is ATP-dependent 6-phosphofructokinase (PPi-PFK).